Reading from the N-terminus, the 1413-residue chain is Zinc finger SWIM domain-containing protein 8 (1413 aa).

Phosphoserine is present on residues serine 36, serine 48, and serine 53. Residues 45-65 (RKQSAGPNSPTGGGGGGGSGG) are disordered. Over residues 55–65 (TGGGGGGGSGG) the composition is skewed to gly residues. The segment at 172 to 208 (YNVAVMFDRCRVTSCSCTCGAGAKWCTHVVALCLFRI) adopts an SWIM-type zinc-finger fold. Positions 600-817 (ESQTHKPQTL…ESHAPHVPNQ (218 aa)) are disordered. Residues 604–625 (HKPQTLSSFYSSSRPATASQRS) are compositionally biased toward polar residues. Residues 704–715 (SRGGYNGRGWGS) show a composition bias toward gly residues. Phosphothreonine is present on threonine 724. Residues 729 to 744 (IDSSAPETTSDSSPTL) show a composition bias toward polar residues. Residues serine 738, serine 741, and serine 745 each carry the phosphoserine modification. A compositionally biased stretch (low complexity) spans 759-794 (GRGQDSDSISSSSSDSLGSSSSSGSRRASASGGARA). Basic and acidic residues predominate over residues 795–811 (KTVEVGRYKGRRPESHA). Phosphoserine is present on residues serine 852 and serine 1412.

Belongs to the ZSWIM8 family. In terms of assembly, component of the SCF-like E3 ubiquitin-protein ligase complex which contains CUL3, RBX1, ELOB, ELOC and ZSWIM8. Interacts with DAB1.

Its subcellular location is the cytoplasm. The protein resides in the cytosol. It participates in protein modification; protein ubiquitination. In terms of biological role, substrate recognition component of a SCF-like E3 ubiquitin-protein ligase complex that promotes target-directed microRNA degradation (TDMD), a process that mediates degradation of microRNAs (miRNAs). The SCF-like E3 ubiquitin-protein ligase complex acts by catalyzing ubiquitination and subsequent degradation of AGO proteins (AGO1, AGO2, AGO3 and/or AGO4), thereby exposing miRNAs for degradation. Specifically recognizes and binds AGO proteins when they are engaged with a TDMD target. May also acts as a regulator of axon guidance: specifically recognizes misfolded ROBO3 and promotes its ubiquitination and subsequent degradation. Plays an essential role for proper embryonic development of heart and lung. Controls protein quality of DAB1, a key signal molecule for brain development, thus protecting its signaling strength. Mechanistically, recognizes intrinsically disordered regions of DAB1 and eliminates misfolded DAB1 that cannot be properly phosphorylated. This is Zinc finger SWIM domain-containing protein 8 from Bos taurus (Bovine).